Consider the following 1323-residue polypeptide: Regulatory protein ADR1 (1323 aa).

Ser-54 is modified (phosphoserine). 2 consecutive C2H2-type zinc fingers follow at residues 104–126 (FVCE…YRSH) and 132–155 (YPCG…QKIH). Positions 175–216 (KARKNSASSVKFQTPTYGTPDNGNFLNRTTANTRRKASPEAN) are disordered. Residues 179 to 206 (NSASSVKFQTPTYGTPDNGNFLNRTTAN) are compositionally biased toward polar residues. Phosphothreonine is present on residues Thr-188 and Thr-193. Ser-230 is modified (phosphoserine; by PKA; in vitro). Ser-258 carries the post-translational modification Phosphoserine. Residue Thr-259 is modified to Phosphothreonine. Residues Ser-299, Ser-323, and Ser-325 each carry the phosphoserine modification. Thr-327 carries the phosphothreonine modification.

Phosphorylation at Ser-230 by cAMP-dependent protein kinase A does not affect DNA binding but appears to prevent transcription of ADH2 during glucose repression.

The protein resides in the nucleus. In terms of biological role, required for transcriptional activation of glucose-repressible alcohol dehydrogenase (ADH2). This chain is Regulatory protein ADR1 (ADR1), found in Saccharomyces cerevisiae (strain ATCC 204508 / S288c) (Baker's yeast).